The primary structure comprises 137 residues: Small ribosomal subunit protein bS6 (137 aa).

Belongs to the bacterial ribosomal protein bS6 family.

Binds together with bS18 to 16S ribosomal RNA. This Mycoplasma mycoides subsp. mycoides SC (strain CCUG 32753 / NCTC 10114 / PG1) protein is Small ribosomal subunit protein bS6.